A 298-amino-acid chain; its full sequence is tRNA-uridine aminocarboxypropyltransferase 2 (298 aa).

At Met-1 the chain carries N-acetylmethionine. A compositionally biased stretch (basic and acidic residues) spans 1-10; it reads MEPQAEERTL. Residues 1 to 55 are disordered; that stretch reads MEPQAEERTLGEPAPPPSGALASPTPDEEERTEGGAPPTATPAGASGDSTSADGL. Low complexity predominate over residues 34 to 45; the sequence is GGAPPTATPAGA. Ser-132 carries the post-translational modification Phosphoserine. Residues 178 to 181 carry the DXTW motif; the sequence is DGTW.

Belongs to the TDD superfamily. DTWD2 family.

Its subcellular location is the nucleus. The protein localises to the cytoplasm. The enzyme catalyses a uridine in tRNA + S-adenosyl-L-methionine = a 3-[(3S)-3-amino-3-carboxypropyl]uridine in tRNA + S-methyl-5'-thioadenosine + H(+). In terms of biological role, catalyzes the formation of 3-(3-amino-3-carboxypropyl)uridine (acp3U) at position 20a in the D-loop of several cytoplasmic tRNAs (acp3U(20a)). Also has a weak activity to form acp3U at position 20 in the D-loop of tRNAs (acp3U(20)). Involved in glycoRNA biosynthesis by mediating formation of acp3U, which acts as an attachment site for N-glycans on tRNAs. GlycoRNAs consist of RNAs modified with secretory N-glycans that are presented on the cell surface. This Mus musculus (Mouse) protein is tRNA-uridine aminocarboxypropyltransferase 2.